The primary structure comprises 319 residues: Annexin A5 (319 aa).

Residue alanine 2 is modified to N-acetylalanine. 4 Annexin repeats span residues 13 to 84, 85 to 156, 168 to 240, and 244 to 315; these read FDGR…AMMK, PSRL…VLLQ, AQVE…AVVK, and SIPA…LLCG. Lysine 27 is covalently cross-linked (Glycyl lysine isopeptide (Lys-Gly) (interchain with G-Cter in SUMO1); alternate). Residue lysine 27 forms a Glycyl lysine isopeptide (Lys-Gly) (interchain with G-Cter in SUMO2); alternate linkage. Phosphoserine is present on serine 35. N6-acetyllysine is present on residues lysine 68, lysine 74, lysine 77, lysine 95, and lysine 99. The residue at position 288 (lysine 288) is an N6-succinyllysine. The [IL]-x-C-x-x-[DE] motif motif lies at 312 to 318; sequence LLCGGED.

This sequence belongs to the annexin family. In terms of assembly, monomer. Binds ATRX and EIF5B. Post-translationally, S-nitrosylation is induced by interferon-gamma and oxidatively-modified low-densitity lipoprotein (LDL(ox)) possibly implicating the iNOS-S100A8/9 transnitrosylase complex.

This protein is an anticoagulant protein that acts as an indirect inhibitor of the thromboplastin-specific complex, which is involved in the blood coagulation cascade. This Mus musculus (Mouse) protein is Annexin A5 (Anxa5).